The primary structure comprises 704 residues: Plasma membrane ATPase 2 (704 aa).

Residues Cys-1–Pro-16 traverse the membrane as a helical segment. The Extracellular segment spans residues Ile-17–Ile-26. A helical membrane pass occupies residues Asp-27–Thr-48. Residues Met-49–Lys-395 are Cytoplasmic-facing. Residue Asp-81 is the 4-aspartylphosphate intermediate of the active site. Mg(2+)-binding residues include Asp-340 and Asp-344. Residues Asn-396–Leu-417 traverse the membrane as a helical segment. Residues Ile-418–Asp-422 are Extracellular-facing. A helical membrane pass occupies residues Phe-423–Asp-445. Residues Arg-446 to Ile-461 lie on the Cytoplasmic side of the membrane. The helical transmembrane segment at Phe-462–Ala-482 threads the bilayer. Over Ala-483 to Arg-507 the chain is Extracellular. Residues Lys-508–Thr-528 form a helical membrane-spanning segment. Over Arg-529 to Gly-540 the chain is Cytoplasmic. Residues Leu-541–Ala-561 form a helical membrane-spanning segment. Topologically, residues Ser-562–Gly-570 are extracellular. Residues Ile-571 to Asp-591 form a helical membrane-spanning segment. Topologically, residues Ile-592 to Val-704 are cytoplasmic.

Belongs to the cation transport ATPase (P-type) (TC 3.A.3) family. Type IIIA subfamily. In terms of assembly, possibly exists as a homodimer or a homotrimer.

The protein localises to the cell membrane. It catalyses the reaction ATP + H2O + H(+)(in) = ADP + phosphate + 2 H(+)(out). Functionally, the plasma membrane ATPase of plants and fungi is a hydrogen ion pump. The proton gradient it generates drives the active transport of nutrients by H(+)-symport. The resulting external acidification and/or internal alkinization may mediate growth responses. The chain is Plasma membrane ATPase 2 (LHA2) from Solanum lycopersicum (Tomato).